Consider the following 227-residue polypeptide: Venom allergen 5 (227 aa).

The signal sequence occupies residues 1 to 21 (MKISCLICLVIVLTIIHLSQA). Intrachain disulfides connect Cys25-Cys37, Cys29-Cys125, Cys49-Cys117, and Cys193-Cys210. Residues 69–212 (EEHNRFRQKV…MQIHYLICNY (144 aa)) enclose the SCP domain.

Belongs to the CRISP family. Venom allergen 5-like subfamily. As to expression, expressed by the venom gland.

Its subcellular location is the secreted. This is Venom allergen 5 from Polistes dominula (European paper wasp).